The sequence spans 624 residues: MRGPCCWPLSLLLLFLQSWETQLQSAGPRCYNGPLDLVFMIDSSRSVRPFEFETMRQFLVGLLRSLDVGLNATRVGVIQYSSQVQSVFPLGAFSRREDMERAIRAVVPLAQGTMTGLAIQYAMNVAFSEAEGARPSEERVPRVLVIVTDGRPQDRVAEVAAQARARGIEIYAVGVQRADVGSLRTMASPPLDQHVFLVESFDLIQEFGLQFQGRLCGKDLCAELVHGCQHLCVNAPGTFYCACNSGYKLAPDNKNCLALDLCAEGTHGCEHLCVNSVDSYFCRCRAGFALQQDQRSCRAIDYCSFGNHSCQHECVSTLAGPQCRCREGHDLLPDGRSCRVRDFCNGVDHGCEFQCVSEGLSFHCLCPEGRRLQADGKSCDRCREGHVDLVLLVDGSKSVRPQNFELVKRFVNQIVDFLDVSPEGTRVGLVQFSSRVRTEFPLGRYGTAAEVKQAVLAVEYMERGTMTGLALRHMVEHSFSEAQGARPRDLNVPRVGLVFTDGRSQDDISVWAARAKEEGIVMYAVGVGKAVEEELREIASEPSELHVSYSPDFSTMTHLLENLKGSICPEEGIGAGTELRSPCECESLVEFQGRTLGALESLTQNLARLTERLEELENQLASRK.

The signal sequence occupies residues 1–21 (MRGPCCWPLSLLLLFLQSWET). Positions 36-215 (DLVFMIDSSR…EFGLQFQGRL (180 aa)) constitute a VWFA 1 domain. Asparagine 71 carries an N-linked (GlcNAc...) asparagine glycan. 4 consecutive EGF-like domains span residues 217–257 (GKDL…KNCL), 258–298 (ALDL…RSCR), 299–339 (AIDY…RSCR), and 340–380 (VRDF…KSCD). Disulfide bonds link cysteine 221–cysteine 232, cysteine 228–cysteine 241, cysteine 243–cysteine 256, cysteine 262–cysteine 273, cysteine 269–cysteine 282, cysteine 284–cysteine 297, cysteine 303–cysteine 314, cysteine 310–cysteine 323, cysteine 325–cysteine 338, cysteine 344–cysteine 355, cysteine 351–cysteine 364, and cysteine 366–cysteine 379. An N-linked (GlcNAc...) asparagine glycan is attached at asparagine 307. The VWFA 2 domain maps to 388–563 (DLVLLVDGSK…STMTHLLENL (176 aa)). Residues 590 to 623 (EFQGRTLGALESLTQNLARLTERLEELENQLASR) are a coiled coil.

In terms of assembly, interacts with COMP. As to expression, lung, brain, sternum, kidney and heart.

The protein resides in the secreted. Major component of the extracellular matrix of cartilage. This Mus musculus (Mouse) protein is Matrilin-4 (Matn4).